We begin with the raw amino-acid sequence, 66 residues long: Large ribosomal subunit protein uL29 (66 aa).

It belongs to the universal ribosomal protein uL29 family.

This chain is Large ribosomal subunit protein uL29, found in Thermotoga neapolitana (strain ATCC 49049 / DSM 4359 / NBRC 107923 / NS-E).